The chain runs to 149 residues: Large ribosomal subunit protein bL9 (149 aa).

The protein belongs to the bacterial ribosomal protein bL9 family.

Its function is as follows. Binds to the 23S rRNA. This Legionella pneumophila subsp. pneumophila (strain Philadelphia 1 / ATCC 33152 / DSM 7513) protein is Large ribosomal subunit protein bL9.